The chain runs to 1169 residues: Pesticidal crystal protein Cry1Fb (1169 aa).

It belongs to the delta endotoxin family.

In terms of biological role, promotes colloidosmotic lysis by binding to the midgut epithelial cells of insects. The sequence is that of Pesticidal crystal protein Cry1Fb (cry1Fb) from Bacillus thuringiensis subsp. morrisoni.